A 332-amino-acid polypeptide reads, in one-letter code: uncharacterized protein (332 aa).

Acidic residues-rich tracts occupy residues 290–314 and 323–332; these read EDID…DSFG and EDSEDSDNSE. The segment at 290–332 is disordered; the sequence is EDIDDIDDSDESDDSDDSEDSDSFGDSDSSGNSEDSEDSDNSE.

The protein belongs to the mimivirus L17x/L18x family.

This is an uncharacterized protein from Acanthamoeba polyphaga mimivirus (APMV).